The following is a 131-amino-acid chain: MAAKLIVFVCAIALVAQSVLGTGCGCCCRGCGCGCGGCGCGCCENFRVCSNSAAPTGLSICSENRYKGDVCVCGEVPFLGTADVCGNMCSSGCGCIDYGCGNGCVGITRSCGGCGCGCGGCGCGCGGCGCC.

The N-terminal stretch at 1–21 is a signal peptide; the sequence is MAAKLIVFVCAIALVAQSVLG. The tract at residues 22–46 is left arm; the sequence is TGCGCCCRGCGCGCGGCGCGCCENF. The tract at residues 47–110 is central domain; it reads RVCSNSAAPT…GNGCVGITRS (64 aa). The segment at 111–131 is right arm (Gly-rich tandem repeats); that stretch reads CGGCGCGCGGCGCGCGGCGCC.

The protein belongs to the chorion protein family.

Functionally, this protein is one of many from the eggshell of the silk moth. In Bombyx mori (Silk moth), this protein is Chorion class high-cysteine HCB protein 12.